The primary structure comprises 400 residues: Renin (400 aa).

The N-terminal stretch at 1–17 (MPLWGLLLALWGCSTFS) is a signal peptide. Positions 18-59 (LPADTAAFRRIFLKKMPSVRESLKERGVDMAQLGAEWSQLTK) are cleaved as a propeptide — activation peptide. N65 carries N-linked (GlcNAc...) asparagine glycosylation. The Peptidase A1 domain maps to 80–397 (YYGEIGIGTP…DRRNNRIGFA (318 aa)). D98 is an active-site residue. A disulfide bridge links C111 with C118. An N-linked (GlcNAc...) asparagine glycan is attached at N135. C277 and C281 are joined by a disulfide. D286 is a catalytic residue. C320 and C356 form a disulfide bridge. Residue N353 is glycosylated (N-linked (GlcNAc...) asparagine).

Belongs to the peptidase A1 family. Interacts with ATP6AP2. In terms of tissue distribution, kidney.

The protein resides in the secreted. Its subcellular location is the membrane. It carries out the reaction Cleavage of Leu-|-Xaa bond in angiotensinogen to generate angiotensin I.. Interaction with ATP6AP2 results in a 5-fold increased efficiency in angiotensinogen processing. Its function is as follows. Renin is a highly specific endopeptidase, whose only known function is to generate angiotensin I from angiotensinogen in the plasma, initiating a cascade of reactions that produce an elevation of blood pressure and increased sodium retention by the kidney. This Ovis aries (Sheep) protein is Renin (REN).